Reading from the N-terminus, the 490-residue chain is MTQWEVVIGLETHAQLSTVSKIFSGASTQFGAQPNTQACPVDLALPGVLPVLNRGAVERAIRFGLAIGATVAPRSVFARKNYFYPDLPKGYQISQYEIPVVQGGQITIQVPANEKAGKQAYSKTVNLTRAHLEEDAGKSLHEDFAGMTGIDLNRAGTPLLEIVTEPEMRSAAEAVAYAKALHGLVMWLGICDGNMQEGSFRCDANVSVRPVGQEKFGTRAEIKNLNSFRFLEDAINYEVRRQIELIEDGGEVVQETRLYDPDKRETRSMRSKEDAHDYRYFPDPDLMPLVIGADWIARVKGEMPELPAAMQQRFVEQYGVSAYDAGVLTSTKAMAEYFEALVAKAGAANAKLAANWLMGDVSSQLNRDGIDIDACPVSAAQLALVLQRIADGTISNKIAKEIFVTIWDEKAADEGAADRIIEAKGLKQISDTGALEAIIDEVLAANAKSVEEFRAGKDKAFNALVGQAMKATKGKANPQQVNELLKKKLG.

The protein belongs to the GatB/GatE family. GatB subfamily. As to quaternary structure, heterotrimer of A, B and C subunits.

It catalyses the reaction L-glutamyl-tRNA(Gln) + L-glutamine + ATP + H2O = L-glutaminyl-tRNA(Gln) + L-glutamate + ADP + phosphate + H(+). The catalysed reaction is L-aspartyl-tRNA(Asn) + L-glutamine + ATP + H2O = L-asparaginyl-tRNA(Asn) + L-glutamate + ADP + phosphate + 2 H(+). Functionally, allows the formation of correctly charged Asn-tRNA(Asn) or Gln-tRNA(Gln) through the transamidation of misacylated Asp-tRNA(Asn) or Glu-tRNA(Gln) in organisms which lack either or both of asparaginyl-tRNA or glutaminyl-tRNA synthetases. The reaction takes place in the presence of glutamine and ATP through an activated phospho-Asp-tRNA(Asn) or phospho-Glu-tRNA(Gln). The protein is Aspartyl/glutamyl-tRNA(Asn/Gln) amidotransferase subunit B of Burkholderia pseudomallei (strain 1106a).